The sequence spans 194 residues: Putative manganese efflux pump MntP (194 aa).

6 helical membrane passes run 3–23 (PITT…AAIG), 37–57 (LYVA…GWLL), 65–85 (IATF…IHMI), 112–132 (LAAT…SMAF), 137–157 (IGIV…FGVM), and 170–190 (AEIV…YEHL).

Belongs to the MntP (TC 9.B.29) family.

It localises to the cell inner membrane. Functionally, probably functions as a manganese efflux pump. This is Putative manganese efflux pump MntP from Xylella fastidiosa (strain M23).